The sequence spans 332 residues: Flotillin-like protein FloA (332 aa).

The helical transmembrane segment at 9 to 29 threads the bilayer; sequence FILIGGGIIFVVLFFHYVPFF.

This sequence belongs to the flotillin-like FloA family. Homooligomerizes.

The protein localises to the cell membrane. It is found in the membrane raft. Functionally, found in functional membrane microdomains (FMM) that may be equivalent to eukaryotic membrane rafts. FMMs are highly dynamic and increase in number as cells age. Flotillins are thought to be important factors in membrane fluidity. The chain is Flotillin-like protein FloA from Phocaeicola vulgatus (strain ATCC 8482 / DSM 1447 / JCM 5826 / CCUG 4940 / NBRC 14291 / NCTC 11154) (Bacteroides vulgatus).